Reading from the N-terminus, the 289-residue chain is Oxaloacetate decarboxylase (289 aa).

Ser-50 is a binding site for substrate. Asp-88 provides a ligand contact to Mg(2+). Substrate-binding residues include Arg-159 and His-235.

The protein belongs to the isocitrate lyase/PEP mutase superfamily. Oxaloacetate decarboxylase family. As to quaternary structure, homotetramer; dimer of dimers. Mg(2+) serves as cofactor.

It carries out the reaction oxaloacetate + H(+) = pyruvate + CO2. In terms of biological role, catalyzes the decarboxylation of oxaloacetate into pyruvate. Seems to play a role in maintaining cellular concentrations of bicarbonate and pyruvate. This Pseudomonas savastanoi pv. phaseolicola (strain 1448A / Race 6) (Pseudomonas syringae pv. phaseolicola (strain 1448A / Race 6)) protein is Oxaloacetate decarboxylase.